Consider the following 92-residue polypeptide: Small ribosomal subunit protein uS19 (92 aa).

It belongs to the universal ribosomal protein uS19 family.

Protein S19 forms a complex with S13 that binds strongly to the 16S ribosomal RNA. The protein is Small ribosomal subunit protein uS19 of Rickettsia bellii (strain OSU 85-389).